The following is a 294-amino-acid chain: GDP-6-deoxy-D-talose 4-dehydrogenase (294 aa).

NAD(+)-binding positions include 11-12, 38-39, 60-64, threonine 104, tyrosine 128, lysine 132, and phenylalanine 154; these read FI, DL, and LAALT. Residues threonine 104 and tyrosine 128 each contribute to the substrate site. Tyrosine 128 (proton acceptor) is an active-site residue. Substrate contacts are provided by asparagine 155 and arginine 190.

This sequence belongs to the NAD(P)-dependent epimerase/dehydratase family.

It catalyses the reaction GDP-6-deoxy-alpha-D-talose + NAD(+) = GDP-4-dehydro-alpha-D-rhamnose + NADH + H(+). The enzyme catalyses GDP-6-deoxy-alpha-D-talose + NADP(+) = GDP-4-dehydro-alpha-D-rhamnose + NADPH + H(+). Its pathway is bacterial outer membrane biogenesis; LPS O-antigen biosynthesis. Catalyzes the conversion of GDP-4-dehydro-6-deoxy-D-mannose to GDP-6-deoxy-D-talose. This is GDP-6-deoxy-D-talose 4-dehydrogenase (tld) from Aggregatibacter actinomycetemcomitans (Actinobacillus actinomycetemcomitans).